Reading from the N-terminus, the 219-residue chain is uncharacterized protein (219 aa).

Positions 1 to 15 are cleaved as a signal peptide; sequence MYVLFLLSWVLVAGA. An N-linked (GlcNAc...) asparagine glycan is attached at N118. Residues 138–174 are disordered; it reads GEVGEDPGKRARKRRLGLPIGEPGEDVGKRMRQRQQG.

Component of the acid-insoluble and acid-soluble organic matrix of calcified layers of the shell (at protein level).

The protein localises to the secreted. This is an uncharacterized protein from Lottia gigantea (Giant owl limpet).